Consider the following 403-residue polypeptide: Acetylornithine/succinyldiaminopimelate aminotransferase (403 aa).

Residues 107–108 (GA) and phenylalanine 140 each bind pyridoxal 5'-phosphate. Arginine 143 contributes to the N(2)-acetyl-L-ornithine binding site. 225-228 (DEVQ) provides a ligand contact to pyridoxal 5'-phosphate. Residue lysine 254 is modified to N6-(pyridoxal phosphate)lysine. Residue threonine 282 participates in N(2)-acetyl-L-ornithine binding. Threonine 283 is a binding site for pyridoxal 5'-phosphate.

The protein belongs to the class-III pyridoxal-phosphate-dependent aminotransferase family. ArgD subfamily. As to quaternary structure, homodimer. The cofactor is pyridoxal 5'-phosphate.

The protein resides in the cytoplasm. It catalyses the reaction N(2)-acetyl-L-ornithine + 2-oxoglutarate = N-acetyl-L-glutamate 5-semialdehyde + L-glutamate. It carries out the reaction N-succinyl-(2S,6S)-2,6-diaminopimelate + 2-oxoglutarate = (S)-2-succinylamino-6-oxoheptanedioate + L-glutamate. The protein operates within amino-acid biosynthesis; L-arginine biosynthesis; N(2)-acetyl-L-ornithine from L-glutamate: step 4/4. Its pathway is amino-acid biosynthesis; L-lysine biosynthesis via DAP pathway; LL-2,6-diaminopimelate from (S)-tetrahydrodipicolinate (succinylase route): step 2/3. Functionally, involved in both the arginine and lysine biosynthetic pathways. This chain is Acetylornithine/succinyldiaminopimelate aminotransferase, found in Photorhabdus laumondii subsp. laumondii (strain DSM 15139 / CIP 105565 / TT01) (Photorhabdus luminescens subsp. laumondii).